A 115-amino-acid polypeptide reads, in one-letter code: Insulin (115 aa).

The first 26 residues, Met1 to Thr26, serve as a signal peptide directing secretion. Disulfide bonds link Cys33-Cys101, Cys45-Cys114, and Cys100-Cys105. Positions Asp60 to Ser92 are cleaved as a propeptide — c peptide.

The protein belongs to the insulin family. As to quaternary structure, heterodimer of a B chain and an A chain linked by two disulfide bonds.

It localises to the secreted. Functionally, insulin decreases blood glucose concentration. It increases cell permeability to monosaccharides, amino acids and fatty acids. It accelerates glycolysis, the pentose phosphate cycle, and glycogen synthesis in liver. This chain is Insulin (ins), found in Myxine glutinosa (Atlantic hagfish).